We begin with the raw amino-acid sequence, 176 residues long: RNA 2',3'-cyclic phosphodiesterase (176 aa).

H43 functions as the Proton donor in the catalytic mechanism. Short sequence motifs (HXTX) lie at residues 43-46 and 125-128; these read HLTL and HITL. H125 serves as the catalytic Proton acceptor.

This sequence belongs to the 2H phosphoesterase superfamily. ThpR family. Monomer.

The enzyme catalyses a 3'-end 2',3'-cyclophospho-ribonucleotide-RNA + H2O = a 3'-end 2'-phospho-ribonucleotide-RNA + H(+). In terms of biological role, hydrolyzes RNA 2',3'-cyclic phosphodiester to an RNA 2'-phosphomonoester. In vitro, can also ligate 5' and 3' half-tRNA molecules with 2',3'-cyclic phosphate and 5'-hydroxyl termini, respectively, to the product containing the 2'-5' phosphodiester linkage. This reaction does not require ATP and is reversible. The polypeptide is RNA 2',3'-cyclic phosphodiesterase (Escherichia coli (strain K12)).